Consider the following 91-residue polypeptide: RNA-binding protein Hfq (91 aa).

One can recognise a Sm domain in the interval 9–68 (DPFLNALRRERVPVSIYLVNGIKLQGQVESFDQFVILLKNTVSQMVYKHAISTVVPSRPF). The interval 66–91 (RPFNVGSHQGGSSNYNAQQDDSAGEQ) is disordered. Over residues 71–91 (GSHQGGSSNYNAQQDDSAGEQ) the composition is skewed to polar residues.

It belongs to the Hfq family. As to quaternary structure, homohexamer.

Its function is as follows. RNA chaperone that binds small regulatory RNA (sRNAs) and mRNAs to facilitate mRNA translational regulation in response to envelope stress, environmental stress and changes in metabolite concentrations. Also binds with high specificity to tRNAs. This chain is RNA-binding protein Hfq, found in Shewanella amazonensis (strain ATCC BAA-1098 / SB2B).